A 236-amino-acid polypeptide reads, in one-letter code: Sugar fermentation stimulation protein homolog (236 aa).

It belongs to the SfsA family.

In Pseudomonas fluorescens (strain SBW25), this protein is Sugar fermentation stimulation protein homolog.